The sequence spans 248 residues: MWIGVVSLFPDMFRAISDNGVTGRAVKNKLLSIQCWNPRDFTLDKHRTVDDRPYGGGPGMLMMVKPLRDAILAAKKAAREAGHEAKVIYLSPQGKRLDHCGAQLLSGSDALILVAGRYEGVDERLIESLVDEEWSVGDYVLSGGELPAMILIDAVVRFVPGVLGHVLSAEQDSFADGLLDCPHYTRPEVLDGKQVPSVLLSGDHEKIRLWRSKQALQRTKQRRPDLLNNLALTDEQAKLLAALESDSD.

S-adenosyl-L-methionine-binding positions include glycine 116 and valine 136–leucine 141.

It belongs to the RNA methyltransferase TrmD family. Homodimer.

It localises to the cytoplasm. It carries out the reaction guanosine(37) in tRNA + S-adenosyl-L-methionine = N(1)-methylguanosine(37) in tRNA + S-adenosyl-L-homocysteine + H(+). Specifically methylates guanosine-37 in various tRNAs. This is tRNA (guanine-N(1)-)-methyltransferase from Psychromonas ingrahamii (strain DSM 17664 / CCUG 51855 / 37).